Reading from the N-terminus, the 83-residue chain is ATP synthase subunit c, chloroplastic (83 aa).

The next 2 membrane-spanning stretches (helical) occupy residues 3-23 and 57-77; these read PIISAASVIAAGLSVGLAAIG and LAFMEALTIYGLVVALSLLFA.

The protein belongs to the ATPase C chain family. In terms of assembly, F-type ATPases have 2 components, F(1) - the catalytic core - and F(0) - the membrane proton channel. F(1) has five subunits: alpha(3), beta(3), gamma(1), delta(1), epsilon(1). F(0) has four main subunits: a(1), b(1), b'(1) and c(10-14). The alpha and beta chains form an alternating ring which encloses part of the gamma chain. F(1) is attached to F(0) by a central stalk formed by the gamma and epsilon chains, while a peripheral stalk is formed by the delta, b and b' chains.

It localises to the plastid. Its subcellular location is the chloroplast thylakoid membrane. F(1)F(0) ATP synthase produces ATP from ADP in the presence of a proton or sodium gradient. F-type ATPases consist of two structural domains, F(1) containing the extramembraneous catalytic core and F(0) containing the membrane proton channel, linked together by a central stalk and a peripheral stalk. During catalysis, ATP synthesis in the catalytic domain of F(1) is coupled via a rotary mechanism of the central stalk subunits to proton translocation. Functionally, key component of the F(0) channel; it plays a direct role in translocation across the membrane. A homomeric c-ring of between 10-14 subunits forms the central stalk rotor element with the F(1) delta and epsilon subunits. The sequence is that of ATP synthase subunit c, chloroplastic from Diacronema lutheri (Unicellular marine alga).